Consider the following 479-residue polypeptide: Integrin-linked protein kinase 1 (479 aa).

A phosphoserine mark is found at serine 17 and serine 26. The interval phenylalanine 29–proline 73 is disordered. Basic and acidic residues predominate over residues proline 54–histidine 69. ANK repeat units lie at residues aspartate 77 to serine 106 and aspartate 110 to alanine 139. The Protein kinase domain occupies leucine 194 to valine 461. ATP contacts are provided by residues lysine 200–alanine 208 and lysine 222. The active-site Proton acceptor is aspartate 319.

The protein belongs to the protein kinase superfamily. Ser/Thr protein kinase family. Interacts with CML9 and POT5/HAK5. Post-translationally, autophosphorylated at Ser-17 and Ser-26.

The protein localises to the cell membrane. It localises to the endoplasmic reticulum membrane. It catalyses the reaction L-seryl-[protein] + ATP = O-phospho-L-seryl-[protein] + ADP + H(+). The enzyme catalyses L-threonyl-[protein] + ATP = O-phospho-L-threonyl-[protein] + ADP + H(+). With respect to regulation, kinase activity is suppressed by interaction with CML9. Functionally, functions as a link between plant defense pathways, stress responses and potassium homeostasis. Promotes osmotic stress sensitivity, responses to the bacterial-derived pathogen-associated molecular pattern (PAMP) flg22, and resistance to bacterial pathogens. Promotes the accumulation of POT5/HAK5, a potassium transporter that mediates high-affinity uptake during potassium deficiency. The protein is Integrin-linked protein kinase 1 of Arabidopsis thaliana (Mouse-ear cress).